A 70-amino-acid chain; its full sequence is Protein FlmC homolog (70 aa).

Residues 1 to 21 (MSSPHQDSLLPRFAQGEEGHE) are disordered.

The chain is Protein FlmC homolog from Escherichia coli.